The sequence spans 256 residues: V-type proton ATPase subunit D (256 aa).

Basic and acidic residues predominate over residues 211–230; it reads QNETAKLDAEMKLKRDRAEQ. Positions 211-256 are disordered; that stretch reads QNETAKLDAEMKLKRDRAEQDASEVAADEEPQGETLVADQEDDVIF.

It belongs to the V-ATPase D subunit family. In terms of assembly, V-ATPase is a heteromultimeric enzyme composed of a peripheral catalytic V1 complex (components A to H) attached to an integral membrane V0 proton pore complex (components: a, c, c', c'', d, e, f and VOA1). Interacts with RAV1 and RAV2 components of the RAVE complex, which are essential for the stability and assembly of V-ATPase.

The protein localises to the vacuole membrane. Functionally, subunit of the V1 complex of vacuolar(H+)-ATPase (V-ATPase), a multisubunit enzyme composed of a peripheral complex (V1) that hydrolyzes ATP and a membrane integral complex (V0) that translocates protons. V-ATPase is responsible for acidifying and maintaining the pH of intracellular compartments. The protein is V-type proton ATPase subunit D of Saccharomyces cerevisiae (strain ATCC 204508 / S288c) (Baker's yeast).